We begin with the raw amino-acid sequence, 568 residues long: Kelch-like protein 12 (568 aa).

The 68-residue stretch at 33–100 folds into the BTB domain; sequence CDVTLRVEQK…VYTETVHVTV (68 aa). Positions 135 to 236 constitute a BACK domain; it reads CLGIRDFAET…LTPRYITDVI (102 aa). Kelch repeat units lie at residues 282-329, 331-379, 380-426, 427-473, 474-520, and 522-567; these read VLLV…SLHD, IYVI…TLGD, MIYV…VASG, VIYC…LLND, HIYV…VLRG, and LYAI…ALRE.

In terms of assembly, component of the BCR(KLHL12) E3 ubiquitin ligase complex, at least composed of CUL3 and KLHL12 and RBX1. This complex interacts with DVL3 upon activation of the Wnt signaling pathway by WNT3A. Interacts with DRD4, KLHL2 and SEC31A. Interacts with PEF1 and PDCD6/ALG-2; interaction takes place in response to cytosolic calcium increase and leads to bridge together the BCR(KLHL12) complex and SEC31 (SEC31A or SEC31B). Ubiquitinated by the SCF(FBXL17) complex, leading to its degradation by the proteasome: ubiquitination by the SCF(FBXL17) complex takes place when aberrant BTB domain dimers are formed.

The protein localises to the cytoplasmic vesicle. Its subcellular location is the COPII-coated vesicle. It participates in protein modification; protein ubiquitination. Functionally, substrate-specific adapter of a BCR (BTB-CUL3-RBX1) E3 ubiquitin ligase complex that acts as a negative regulator of Wnt signaling pathway and ER-Golgi transport. The BCR(KLHL12) complex is involved in ER-Golgi transport by regulating the size of COPII coats, thereby playing a key role in collagen export, which is required for embryonic stem (ES) cells division: BCR(KLHL12) acts by mediating monoubiquitination of SEC31 (SEC31A or SEC31B). The BCR(KLHL12) complex is also involved in neural crest specification: in response to cytosolic calcium increase, interacts with the heterodimer formed with PEF1 and PDCD6/ALG-2, leading to bridge together the BCR(KLHL12) complex and SEC31 (SEC31A or SEC31B), promoting monoubiquitination of SEC31 and subsequent collagen export. As part of the BCR(KLHL12) complex, also acts as a negative regulator of the Wnt signaling pathway by mediating ubiquitination and subsequent proteolysis of DVL3. The BCR(KLHL12) complex also mediates polyubiquitination of DRD4 and PEF1, without leading to degradation of these proteins. The polypeptide is Kelch-like protein 12 (KLHL12) (Bos taurus (Bovine)).